The chain runs to 116 residues: Ribosome-binding factor A (116 aa).

It belongs to the RbfA family. Monomer. Binds 30S ribosomal subunits, but not 50S ribosomal subunits or 70S ribosomes.

It localises to the cytoplasm. Its function is as follows. One of several proteins that assist in the late maturation steps of the functional core of the 30S ribosomal subunit. Associates with free 30S ribosomal subunits (but not with 30S subunits that are part of 70S ribosomes or polysomes). Required for efficient processing of 16S rRNA. May interact with the 5'-terminal helix region of 16S rRNA. This is Ribosome-binding factor A from Clostridium botulinum (strain Eklund 17B / Type B).